Consider the following 239-residue polypeptide: 2-C-methyl-D-erythritol 4-phosphate cytidylyltransferase (239 aa).

The protein belongs to the IspD/TarI cytidylyltransferase family. IspD subfamily.

The enzyme catalyses 2-C-methyl-D-erythritol 4-phosphate + CTP + H(+) = 4-CDP-2-C-methyl-D-erythritol + diphosphate. It participates in isoprenoid biosynthesis; isopentenyl diphosphate biosynthesis via DXP pathway; isopentenyl diphosphate from 1-deoxy-D-xylulose 5-phosphate: step 2/6. Catalyzes the formation of 4-diphosphocytidyl-2-C-methyl-D-erythritol from CTP and 2-C-methyl-D-erythritol 4-phosphate (MEP). This is 2-C-methyl-D-erythritol 4-phosphate cytidylyltransferase from Acidobacterium capsulatum (strain ATCC 51196 / DSM 11244 / BCRC 80197 / JCM 7670 / NBRC 15755 / NCIMB 13165 / 161).